Consider the following 330-residue polypeptide: Aspartate--ammonia ligase (330 aa).

It belongs to the class-II aminoacyl-tRNA synthetase family. AsnA subfamily.

The protein resides in the cytoplasm. The catalysed reaction is L-aspartate + NH4(+) + ATP = L-asparagine + AMP + diphosphate + H(+). The protein operates within amino-acid biosynthesis; L-asparagine biosynthesis; L-asparagine from L-aspartate (ammonia route): step 1/1. This is Aspartate--ammonia ligase from Escherichia coli O8 (strain IAI1).